Reading from the N-terminus, the 632-residue chain is tRNA uridine 5-carboxymethylaminomethyl modification enzyme MnmG (632 aa).

FAD contacts are provided by residues 15–20, Ile-127, and Ser-182; that span reads GAGHAG. NAD(+) is bound at residue 276 to 290; the sequence is GPRYCPSIEDKIVRF. Gln-373 contacts FAD.

This sequence belongs to the MnmG family. In terms of assembly, homodimer. Heterotetramer of two MnmE and two MnmG subunits. FAD is required as a cofactor.

Its subcellular location is the cytoplasm. In terms of biological role, NAD-binding protein involved in the addition of a carboxymethylaminomethyl (cmnm) group at the wobble position (U34) of certain tRNAs, forming tRNA-cmnm(5)s(2)U34. The polypeptide is tRNA uridine 5-carboxymethylaminomethyl modification enzyme MnmG (Streptococcus pyogenes serotype M6 (strain ATCC BAA-946 / MGAS10394)).